The chain runs to 177 residues: Large ribosomal subunit protein uL6 (177 aa).

Belongs to the universal ribosomal protein uL6 family. As to quaternary structure, part of the 50S ribosomal subunit.

Functionally, this protein binds to the 23S rRNA, and is important in its secondary structure. It is located near the subunit interface in the base of the L7/L12 stalk, and near the tRNA binding site of the peptidyltransferase center. The polypeptide is Large ribosomal subunit protein uL6 (Bradyrhizobium sp. (strain BTAi1 / ATCC BAA-1182)).